An 89-amino-acid polypeptide reads, in one-letter code: Small ribosomal subunit protein uS19 (89 aa).

Belongs to the universal ribosomal protein uS19 family.

Protein S19 forms a complex with S13 that binds strongly to the 16S ribosomal RNA. This Ruthia magnifica subsp. Calyptogena magnifica protein is Small ribosomal subunit protein uS19.